Consider the following 218-residue polypeptide: Synaptonemal complex central element protein 2 (218 aa).

Residues 1 to 32 (MERQGVDVPHVKCKDQEPQPLGESKEHPRWEE) show a composition bias toward basic and acidic residues. The segment at 1–42 (MERQGVDVPHVKCKDQEPQPLGESKEHPRWEENCEEEAGGGP) is disordered. The stretch at 61–87 (SSLDSSIDILQKRAQELIENINKSRQK) forms a coiled coil. Positions 171-218 (RWGPDHSRGKSPPRPGNSQPPDVFVSSVAETTSQATASEVQTNRDGEC) are disordered. The segment covering 198–211 (VAETTSQATASEVQ) has biased composition (polar residues).

It belongs to the SYCE family. Homodimer. Found in a complex with SYCP1 and SYCE1. Interacts with SYCP1, SYCE1 and SYCE3. Interacts with TEX12.

The protein localises to the nucleus. It is found in the chromosome. In terms of biological role, major component of the transverse central element of synaptonemal complexes (SCS), formed between homologous chromosomes during meiotic prophase. Requires SYCP1 in order to be incorporated into the central element. May have a role in the synaptonemal complex assembly, stabilization and recombination. The sequence is that of Synaptonemal complex central element protein 2 (SYCE2) from Homo sapiens (Human).